The sequence spans 476 residues: Bifunctional protein HldE (476 aa).

Residues 1–319 (MKVTLPAFEK…EALKSHQGES (319 aa)) are ribokinase. 195–198 (NMSE) contributes to the ATP binding site. Aspartate 264 is an active-site residue. The interval 345–476 (MTNGCFDILH…AIIQNIMSRH (132 aa)) is cytidylyltransferase.

This sequence in the N-terminal section; belongs to the carbohydrate kinase PfkB family. It in the C-terminal section; belongs to the cytidylyltransferase family. As to quaternary structure, homodimer.

It carries out the reaction D-glycero-beta-D-manno-heptose 7-phosphate + ATP = D-glycero-beta-D-manno-heptose 1,7-bisphosphate + ADP + H(+). The enzyme catalyses D-glycero-beta-D-manno-heptose 1-phosphate + ATP + H(+) = ADP-D-glycero-beta-D-manno-heptose + diphosphate. The protein operates within nucleotide-sugar biosynthesis; ADP-L-glycero-beta-D-manno-heptose biosynthesis; ADP-L-glycero-beta-D-manno-heptose from D-glycero-beta-D-manno-heptose 7-phosphate: step 1/4. Its pathway is nucleotide-sugar biosynthesis; ADP-L-glycero-beta-D-manno-heptose biosynthesis; ADP-L-glycero-beta-D-manno-heptose from D-glycero-beta-D-manno-heptose 7-phosphate: step 3/4. Functionally, catalyzes the phosphorylation of D-glycero-D-manno-heptose 7-phosphate at the C-1 position to selectively form D-glycero-beta-D-manno-heptose-1,7-bisphosphate. In terms of biological role, catalyzes the ADP transfer from ATP to D-glycero-beta-D-manno-heptose 1-phosphate, yielding ADP-D-glycero-beta-D-manno-heptose. The protein is Bifunctional protein HldE of Shewanella amazonensis (strain ATCC BAA-1098 / SB2B).